Consider the following 510-residue polypeptide: 2,3-bisphosphoglycerate-independent phosphoglycerate mutase (510 aa).

Residues Asp13 and Ser63 each coordinate Mn(2+). The Phosphoserine intermediate role is filled by Ser63. Substrate-binding positions include His124, 154-155 (RD), Arg186, Arg192, 262-265 (RADR), and Lys334. Positions 401, 405, 442, 443, and 461 each coordinate Mn(2+).

The protein belongs to the BPG-independent phosphoglycerate mutase family. In terms of assembly, monomer. Mn(2+) is required as a cofactor.

It carries out the reaction (2R)-2-phosphoglycerate = (2R)-3-phosphoglycerate. It functions in the pathway carbohydrate degradation; glycolysis; pyruvate from D-glyceraldehyde 3-phosphate: step 3/5. In terms of biological role, catalyzes the interconversion of 2-phosphoglycerate and 3-phosphoglycerate. This chain is 2,3-bisphosphoglycerate-independent phosphoglycerate mutase, found in Vibrio vulnificus (strain YJ016).